The following is a 496-amino-acid chain: Fizzy-related protein homolog (496 aa).

3 disordered regions span residues 28–51 (RRTL…FIPS), 64–88 (INEN…GKDG), and 105–166 (EKVQ…SPRK). Thr-32 bears the Phosphothreonine mark. Residues 32–42 (TPASSPVSSPS) show a composition bias toward polar residues. Ser-36 bears the Phosphoserine mark. Residues 47–52 (RFIPSR) form an involved in APC/FZR1 E3 ubiquitin-protein ligase complex activity region. N6-acetyllysine is present on Lys-69. 2 stretches are compositionally biased toward basic and acidic residues: residues 76–86 (KAKDATSDNGK) and 106–126 (KVQD…EKKG). Ser-133, Ser-138, Ser-146, and Ser-151 each carry phosphoserine. Residues 146–160 (SPYSLSPVSNKSQKL) are compositionally biased toward polar residues. Lys-159 is modified (N6-acetyllysine). WD repeat units follow at residues 182-222 (PELQ…VTRL), 227-266 (VEGD…KLSM), 269-306 (GHTA…LQSE), 311-350 (GHRQ…PVQQ), 353-395 (EHLA…PLQC), 397-438 (DTGS…QVAK), and 441-480 (GHSY…RSTK).

The protein belongs to the WD repeat CDC20/Fizzy family. As to quaternary structure, the unphosphorylated form interacts with APC/C during mitosis. Interacts with NINL. Interacts (in complex with the anaphase promoting complex APC) with MAD2L2; inhibits FZR1-mediated APC/C activation. Interacts with SIRT2 and USP37. Interacts (via WD repeats) with MAK. Interacts with RBBP8/CtIP; this interaction leads to RBBP8 proteasomal degradation. Interacts with HECW2. Interacts with SASS6; the interaction is regulated by CENATAC and leads to SASS6 proteasomal degradation. Interacts (via N-terminus) with CCNF. Interacts with CDC6. Interacts with TK1 (via the KEN box). Acetylated. Deacetylated by SIRT2 at Lys-69 and Lys-159; deacetylation enhances the interaction of FZR1 with CDC27, leading to activation of anaphase promoting complex/cyclosome (APC/C). In terms of processing, following DNA damage, it is dephosphorylated by CDC14B in G2 phase, leading to its reassociation with the APC/C, and allowing an efficient G2 DNA damage checkpoint. Phosphorylated by MAK. Post-translationally, ubiquitinated by the SCF(CCNF) E3 ubiquitin-protein ligase complex; leading to its degradation by the proteasome. Isoform 2 is expressed at high levels in heart, liver, spleen and some cancer cell lines whereas isoform 3 is expressed only at low levels in these tissues.

It localises to the nucleus. It is found in the cytoplasm. It functions in the pathway protein modification; protein ubiquitination. In terms of biological role, substrate-specific adapter for the anaphase promoting complex/cyclosome (APC/C) E3 ubiquitin-protein ligase complex. Associates with the APC/C in late mitosis, in replacement of CDC20, and activates the APC/C during anaphase and telophase. The APC/C remains active in degrading substrates to ensure that positive regulators of the cell cycle do not accumulate prematurely. At the G1/S transition FZR1 is phosphorylated, leading to its dissociation from the APC/C. Following DNA damage, it is required for the G2 DNA damage checkpoint: its dephosphorylation and reassociation with the APC/C leads to the ubiquitination of PLK1, preventing entry into mitosis. Acts as an adapter for APC/C to target the DNA-end resection factor RBBP8/CtIP for ubiquitination and subsequent proteasomal degradation. Through the regulation of RBBP8/CtIP protein turnover, may play a role in DNA damage response, favoring DNA double-strand repair through error-prone non-homologous end joining (NHEJ) over error-free, RBBP8-mediated homologous recombination (HR). This chain is Fizzy-related protein homolog, found in Homo sapiens (Human).